The following is a 249-amino-acid chain: Dof zinc finger protein DOF4.5 (249 aa).

The Dof-type zinc finger occupies 25–79; it reads RVCARCDSDNTKFCYYNNYCEFQPRYFCKNCRRYWTHGGALRNIPIGGSSRAKRA. The Zn(2+) site is built by cysteine 27, cysteine 30, cysteine 52, and cysteine 55.

The protein localises to the nucleus. In terms of biological role, transcription factor that binds specifically to a 5'-AA[AG]G-3' consensus core sequence. The sequence is that of Dof zinc finger protein DOF4.5 (DOF4.5) from Arabidopsis thaliana (Mouse-ear cress).